Reading from the N-terminus, the 29-residue chain is Small toxic protein ZorP (29 aa).

The chain crosses the membrane as a helical span at residues Val-10 to Leu-27.

Its subcellular location is the membrane. Toxic component of a type I toxin-antitoxin (TA) system. Overexpression leads to cell stasis and a decrease in colony-forming units. Probably repressed by cognate small RNA orzP. Base pairing occurs between 18 bases in the 5' UTR of zorP mRNA and the 5' end of OrzP sRNA. This Escherichia coli O157:H7 protein is Small toxic protein ZorP.